The following is a 480-amino-acid chain: Cysteine--tRNA ligase (480 aa).

Cysteine 29 is a binding site for Zn(2+). Positions 31–41 match the 'HIGH' region motif; the sequence is PTVYADPHLGH. 3 residues coordinate Zn(2+): cysteine 220, histidine 245, and glutamate 249. The short motif at 276–280 is the 'KMSKS' region element; it reads KMAKS. Residue lysine 279 participates in ATP binding.

Belongs to the class-I aminoacyl-tRNA synthetase family. In terms of assembly, monomer. It depends on Zn(2+) as a cofactor.

Its subcellular location is the cytoplasm. The catalysed reaction is tRNA(Cys) + L-cysteine + ATP = L-cysteinyl-tRNA(Cys) + AMP + diphosphate. The polypeptide is Cysteine--tRNA ligase (Thermus thermophilus (strain ATCC 27634 / DSM 579 / HB8)).